The chain runs to 597 residues: Putative heat shock protein HSP 90-beta-3 (597 aa).

ATP is bound by residues Asn-46, Asp-88, and Lys-107. A disordered region spans residues 201–241 (DKEISDDEAEEEKGEKEEEDKDDEEKPKIKDVGSDEEDDSK). The span at 204–223 (ISDDEAEEEKGEKEEEDKDD) shows a compositional bias: acidic residues. Over residues 224-233 (EEKPKIKDVG) the composition is skewed to basic and acidic residues. Residue Arg-334 coordinates ATP. Residues 414 to 446 (LELPEDEEEKKKMEESKEKFENLCKLMKEILDK) are a coiled coil. Acidic residues predominate over residues 564-578 (DEDEVAAEEPSDAVP). A disordered region spans residues 564-597 (DEDEVAAEEPSDAVPDEIPPLEGDEDASRMEEVD). The TPR repeat-binding signature appears at 593–597 (MEEVD).

This sequence belongs to the heat shock protein 90 family. In terms of assembly, homodimer.

Its subcellular location is the cytoplasm. Its function is as follows. Putative molecular chaperone that may promote the maturation, structural maintenance and proper regulation of specific target proteins. This Homo sapiens (Human) protein is Putative heat shock protein HSP 90-beta-3 (HSP90AB3P).